The following is a 113-amino-acid chain: Large ribosomal subunit protein eL31B (113 aa).

It belongs to the eukaryotic ribosomal protein eL31 family. As to quaternary structure, component of the large ribosomal subunit (LSU). Mature yeast ribosomes consist of a small (40S) and a large (60S) subunit. The 40S small subunit contains 1 molecule of ribosomal RNA (18S rRNA) and 33 different proteins (encoded by 57 genes). The large 60S subunit contains 3 rRNA molecules (25S, 5.8S and 5S rRNA) and 46 different proteins (encoded by 81 genes).

The protein localises to the cytoplasm. Functionally, component of the ribosome, a large ribonucleoprotein complex responsible for the synthesis of proteins in the cell. The small ribosomal subunit (SSU) binds messenger RNAs (mRNAs) and translates the encoded message by selecting cognate aminoacyl-transfer RNA (tRNA) molecules. The large subunit (LSU) contains the ribosomal catalytic site termed the peptidyl transferase center (PTC), which catalyzes the formation of peptide bonds, thereby polymerizing the amino acids delivered by tRNAs into a polypeptide chain. The nascent polypeptides leave the ribosome through a tunnel in the LSU and interact with protein factors that function in enzymatic processing, targeting, and the membrane insertion of nascent chains at the exit of the ribosomal tunnel. The protein is Large ribosomal subunit protein eL31B of Saccharomyces cerevisiae (strain ATCC 204508 / S288c) (Baker's yeast).